Here is a 294-residue protein sequence, read N- to C-terminus: Diaminopimelate epimerase (294 aa).

Residues asparagine 11 and asparagine 78 each coordinate substrate. The active-site Proton donor is cysteine 87. Substrate-binding positions include 88-89, asparagine 167, asparagine 203, and 221-222; these read GN and ER. Cysteine 230 functions as the Proton acceptor in the catalytic mechanism. 231 to 232 contributes to the substrate binding site; that stretch reads GT.

This sequence belongs to the diaminopimelate epimerase family. In terms of assembly, homodimer.

It is found in the cytoplasm. It carries out the reaction (2S,6S)-2,6-diaminopimelate = meso-2,6-diaminopimelate. The protein operates within amino-acid biosynthesis; L-lysine biosynthesis via DAP pathway; DL-2,6-diaminopimelate from LL-2,6-diaminopimelate: step 1/1. Functionally, catalyzes the stereoinversion of LL-2,6-diaminopimelate (L,L-DAP) to meso-diaminopimelate (meso-DAP), a precursor of L-lysine and an essential component of the bacterial peptidoglycan. In Mycolicibacterium paratuberculosis (strain ATCC BAA-968 / K-10) (Mycobacterium paratuberculosis), this protein is Diaminopimelate epimerase.